A 72-amino-acid polypeptide reads, in one-letter code: Exodeoxyribonuclease 7 small subunit (72 aa).

It belongs to the XseB family. Heterooligomer composed of large and small subunits.

Its subcellular location is the cytoplasm. The enzyme catalyses Exonucleolytic cleavage in either 5'- to 3'- or 3'- to 5'-direction to yield nucleoside 5'-phosphates.. Bidirectionally degrades single-stranded DNA into large acid-insoluble oligonucleotides, which are then degraded further into small acid-soluble oligonucleotides. The polypeptide is Exodeoxyribonuclease 7 small subunit (Chlamydia muridarum (strain MoPn / Nigg)).